The following is a 270-amino-acid chain: Putative phosphoenolpyruvate synthase regulatory protein (270 aa).

150 to 157 serves as a coordination point for ADP; that stretch reads GVSRCGKT.

It belongs to the pyruvate, phosphate/water dikinase regulatory protein family. PSRP subfamily.

The enzyme catalyses [pyruvate, water dikinase] + ADP = [pyruvate, water dikinase]-phosphate + AMP + H(+). The catalysed reaction is [pyruvate, water dikinase]-phosphate + phosphate + H(+) = [pyruvate, water dikinase] + diphosphate. Its function is as follows. Bifunctional serine/threonine kinase and phosphorylase involved in the regulation of the phosphoenolpyruvate synthase (PEPS) by catalyzing its phosphorylation/dephosphorylation. The polypeptide is Putative phosphoenolpyruvate synthase regulatory protein (Shewanella halifaxensis (strain HAW-EB4)).